The chain runs to 278 residues: Sulfide dehydrogenase subunit beta (278 aa).

A propeptide spanning residues 1 to 4 (MFKI) is cleaved from the precursor. Residues 1–95 (MFKILRKERL…LGPLGKPSHI (95 aa)) enclose the FAD-binding FR-type domain. [2Fe-2S] cluster is bound by residues Cys222, Cys225, and Cys237.

As to quaternary structure, heterodimer of alpha and beta subunits. FAD serves as cofactor. Requires [2Fe-2S] cluster as cofactor.

The protein localises to the cytoplasm. It carries out the reaction n sulfur + hydrogen sulfide + NADP(+) = (n+1) sulfur + NADPH. The enzyme catalyses 2 reduced [2Fe-2S]-[ferredoxin] + NADP(+) + H(+) = 2 oxidized [2Fe-2S]-[ferredoxin] + NADPH. Functionally, a bifunctional enzyme that catalyzes the reduction of elemental sulfur or polysulfide to hydrogen sulfide with NADPH as electron donor. Also functions as a reduced ferredoxin:NADP oxidoreductase with a very high affinity for reduced ferredoxin. Exhibits a broad specificity for various physiological and non-physiological substrates with varied reduction potentials such as methyl viologen, benzyl viologen, FAD, FMN, methylene blue, 2,6-dichlorophenolindophenol (DCIP), cytochrome C and ferricyanide with highest preference for benzyl viologen. Does not reduce fumarate, succinate, nitrate, nitrite, sulfate, sulfite or protons. Does not possess any hydrogenase activity or NADPH-dependent glutamate synthase activity. The sequence is that of Sulfide dehydrogenase subunit beta from Pyrococcus furiosus (strain ATCC 43587 / DSM 3638 / JCM 8422 / Vc1).